Consider the following 166-residue polypeptide: Large ribosomal subunit protein uL10 (166 aa).

It belongs to the universal ribosomal protein uL10 family. In terms of assembly, part of the ribosomal stalk of the 50S ribosomal subunit. The N-terminus interacts with L11 and the large rRNA to form the base of the stalk. The C-terminus forms an elongated spine to which L12 dimers bind in a sequential fashion forming a multimeric L10(L12)X complex.

Forms part of the ribosomal stalk, playing a central role in the interaction of the ribosome with GTP-bound translation factors. The protein is Large ribosomal subunit protein uL10 of Pseudomonas entomophila (strain L48).